Here is a 143-residue protein sequence, read N- to C-terminus: Class II hydrophobin qid3 (143 aa).

Residues 1–17 form the signal peptide; it reads MKFLTVAAVFFTAVLAA. Over residues 20 to 37 the composition is skewed to pro residues; that stretch reads NYPPPPPPTYAPPPPTYT. A disordered region spans residues 20–67; that stretch reads NYPPPPPPTYAPPPPTYTLPPNGNGGGNGNGNGNGNGGGNGNGNGNTN. Tandem repeats lie at residues 41–42, 43–44, 47–48, 49–50, 51–52, 53–54, 55–56, 59–60, 61–62, and 63–64. A 10 X 2 AA repeats of N-G region spans residues 41–64; it reads NGNGGGNGNGNGNGNGGGNGNGNG. Residues 42 to 63 are compositionally biased toward gly residues; that stretch reads GNGGGNGNGNGNGNGGGNGNGN. Cystine bridges form between C74-C124, C85-C97, and C125-C136.

This sequence belongs to the cerato-ulmin hydrophobin family. In terms of assembly, homotetramer. Further self-assembles to form highly ordered films at water-air interfaces through intermolecular interactions.

The protein resides in the secreted. The protein localises to the cell wall. In terms of biological role, aerial growth, conidiation, and dispersal of filamentous fungi in the environment rely upon a capability of their secreting small amphipathic proteins called hydrophobins (HPBs) with low sequence identity. Class I can self-assemble into an outermost layer of rodlet bundles on aerial cell surfaces, conferring cellular hydrophobicity that supports fungal growth, development and dispersal; whereas Class II form highly ordered films at water-air interfaces through intermolecular interactions but contribute nothing to the rodlet structure. Qid3 is a class II hydrophobin that might acts as a chitinase inhibitor at the cell surface that blocks the degradation of the chitin rings localized in the budding region of dividing cells. The sequence is that of Class II hydrophobin qid3 from Trichoderma harzianum (Hypocrea lixii).